The following is a 397-amino-acid chain: Tryptophan synthase beta chain (397 aa).

N6-(pyridoxal phosphate)lysine is present on Lys87.

It belongs to the TrpB family. Tetramer of two alpha and two beta chains. It depends on pyridoxal 5'-phosphate as a cofactor.

It carries out the reaction (1S,2R)-1-C-(indol-3-yl)glycerol 3-phosphate + L-serine = D-glyceraldehyde 3-phosphate + L-tryptophan + H2O. Its pathway is amino-acid biosynthesis; L-tryptophan biosynthesis; L-tryptophan from chorismate: step 5/5. The beta subunit is responsible for the synthesis of L-tryptophan from indole and L-serine. This is Tryptophan synthase beta chain from Escherichia coli O45:K1 (strain S88 / ExPEC).